The sequence spans 663 residues: MAU2 chromatid cohesion factor homolog (663 aa).

TPR repeat units follow at residues 455–488 (GGFYYVQGLHAFHKNSFHEAKRFLRETLKMANAE) and 495–528 (SCSLVLLSHVFLSIGNSKESMNMVTPAMQLASKI).

The protein belongs to the SCC4/mau-2 family. Interacts with Nipped-B to form the cohesin loading complex.

It is found in the nucleus. Its subcellular location is the nucleoplasm. Its function is as follows. Required for association of the cohesin complex with chromatin during interphase. Plays a role in sister chromatid cohesion and normal progression through prometaphase. The protein is MAU2 chromatid cohesion factor homolog of Drosophila willistoni (Fruit fly).